The following is a 282-amino-acid chain: Pantothenate synthetase (282 aa).

30 to 37 (MGNLHDGH) is a binding site for ATP. The Proton donor role is filled by histidine 37. (R)-pantoate is bound at residue glutamine 61. Glutamine 61 is a binding site for beta-alanine. An ATP-binding site is contributed by 149–152 (GEKD). A (R)-pantoate-binding site is contributed by glutamine 155. 186–189 (MSSR) is an ATP binding site.

It belongs to the pantothenate synthetase family. Homodimer.

The protein resides in the cytoplasm. The enzyme catalyses (R)-pantoate + beta-alanine + ATP = (R)-pantothenate + AMP + diphosphate + H(+). Its pathway is cofactor biosynthesis; (R)-pantothenate biosynthesis; (R)-pantothenate from (R)-pantoate and beta-alanine: step 1/1. Catalyzes the condensation of pantoate with beta-alanine in an ATP-dependent reaction via a pantoyl-adenylate intermediate. The polypeptide is Pantothenate synthetase (Alteromonas mediterranea (strain DSM 17117 / CIP 110805 / LMG 28347 / Deep ecotype)).